The following is a 451-amino-acid chain: MSRIERIFAREILDSRGTPTVEVEVWTEFGGYGCAKAPSGASTGVNEALELRDGDKARYNGKGVLKAVKNVNEIIAPELIGIDALDQLTVDRKMLDLDGTEFKTKLGANGILAVSLAVAKAAASELDIPLYKYLGGVQAKKLPVPMLNVINGGEHADSAIDFQEFMIMPVGAKSFSEALRWSSETFQALKSLLKSKKDITAVGDEGGFAPNFEWAYEKHDLESFKKKTPAEIALDLLVDAIKKAGYKPGKDGIMIAMDCASSELYLEDKKYHFKKIEKVTNQEWSLTSDEMISYLEKLVNNYPIISIEDGLAETDWEGFTKLTQKIGDKVQIVGDDLFTTNPKFIKQGINKKAANSTLIKLNQIGTLSETVEAITMTQKAGWTAVVSHRSGETEDTTIADLAVAFNTGQIKTGSMSRSDRIAKYNRLLQIESELGQNAIYDGLEAFYNLNK.

Q163 contacts (2R)-2-phosphoglycerate. Residue E205 is the Proton donor of the active site. Mg(2+)-binding residues include D258, E308, and D335. Residues K360, R389, S390, and K411 each coordinate (2R)-2-phosphoglycerate. K360 acts as the Proton acceptor in catalysis.

Belongs to the enolase family. Mg(2+) is required as a cofactor.

The protein localises to the cytoplasm. Its subcellular location is the secreted. It localises to the cell surface. The enzyme catalyses (2R)-2-phosphoglycerate = phosphoenolpyruvate + H2O. It functions in the pathway carbohydrate degradation; glycolysis; pyruvate from D-glyceraldehyde 3-phosphate: step 4/5. Catalyzes the reversible conversion of 2-phosphoglycerate (2-PG) into phosphoenolpyruvate (PEP). It is essential for the degradation of carbohydrates via glycolysis. In Mycoplasma capricolum subsp. capricolum (strain California kid / ATCC 27343 / NCTC 10154), this protein is Enolase.